The primary structure comprises 222 residues: MTVVIGVLALQGAFIEHVRHVEKCIVENRDFYEKKLSVMTVKDKNQLAQCDALIIPGGESTAMSLIAERTGFYDDLYAFVHNPSKVTWGTCAGLIYISQQLSNEAKLVKTLNLLKVKVKRNAFGRQAQSSTRICDFSNFIPHCNDFPATFIRAPVIEEVLDPEHVQVLYKLDGKDNGGQELIVAAKQKNNILATSFHPELAENDIRFHDWFIREFVLKNYSK.

L-glutamine is bound at residue glycine 58–serine 60. Cysteine 91 (nucleophile) is an active-site residue. L-glutamine-binding positions include arginine 120 and isoleucine 151 to arginine 152. Residues histidine 197 and glutamate 199 each act as charge relay system in the active site.

The protein belongs to the glutaminase PdxT/SNO family.

It carries out the reaction aldehydo-D-ribose 5-phosphate + D-glyceraldehyde 3-phosphate + L-glutamine = pyridoxal 5'-phosphate + L-glutamate + phosphate + 3 H2O + H(+). It catalyses the reaction L-glutamine + H2O = L-glutamate + NH4(+). It functions in the pathway cofactor biosynthesis; pyridoxal 5'-phosphate biosynthesis. Its function is as follows. Catalyzes the hydrolysis of glutamine to glutamate and ammonia as part of the biosynthesis of pyridoxal 5'-phosphate. The resulting ammonia molecule is channeled to the active site of a SNZ isoform. In Saccharomyces cerevisiae (strain ATCC 204508 / S288c) (Baker's yeast), this protein is Probable pyridoxal 5'-phosphate synthase subunit SNO3 (SNO3).